We begin with the raw amino-acid sequence, 306 residues long: Pantothenate kinase (306 aa).

91-98 (GSVAVGKS) contributes to the ATP binding site.

This sequence belongs to the prokaryotic pantothenate kinase family.

It is found in the cytoplasm. The catalysed reaction is (R)-pantothenate + ATP = (R)-4'-phosphopantothenate + ADP + H(+). It participates in cofactor biosynthesis; coenzyme A biosynthesis; CoA from (R)-pantothenate: step 1/5. In Streptococcus pyogenes serotype M1, this protein is Pantothenate kinase (coaA).